Consider the following 242-residue polypeptide: Segregation and condensation protein A (242 aa).

Belongs to the ScpA family. Component of a cohesin-like complex composed of ScpA, ScpB and the Smc homodimer, in which ScpA and ScpB bind to the head domain of Smc. The presence of the three proteins is required for the association of the complex with DNA.

Its subcellular location is the cytoplasm. Participates in chromosomal partition during cell division. May act via the formation of a condensin-like complex containing Smc and ScpB that pull DNA away from mid-cell into both cell halves. The chain is Segregation and condensation protein A from Lactococcus lactis subsp. cremoris (strain MG1363).